Reading from the N-terminus, the 146-residue chain is Probable flagellum biosynthesis repressor protein FlbT 1 (146 aa).

It belongs to the FlbT family.

Functionally, has a post-transcriptional repressor function in flagellum biogenesis. Associates with the 5'-UTR of fljK mRNA and promotes its degradation. The protein is Probable flagellum biosynthesis repressor protein FlbT 1 of Bradyrhizobium diazoefficiens (strain JCM 10833 / BCRC 13528 / IAM 13628 / NBRC 14792 / USDA 110).